A 444-amino-acid chain; its full sequence is E1B 55 kDa protein (444 aa).

The interval 1–27 (MEQDSDLESGRATNQRPPRVRVRGAGV) is disordered. Residues Ser-438 and Ser-439 each carry the phosphoserine modification.

It belongs to the adenoviridae E1B 55 kDa protein family. Interacts with host PML-4 and PML-5; this interaction promotes efficient subnuclear targeting of E1B-55K to PML nuclear bodies. Interacts with E4-ORF3 protein. Interacts with E4-ORF6 protein.

The protein resides in the host nucleus. It is found in the host cytoplasm. In terms of biological role, plays a major role to prevent cellular inhibition of viral genome replication. Assembles an SCF-like E3 ubiquitin ligase complex based on the cellular proteins ELOB, ELOC, CUL5 and RBX1, in cooperation with viral E4orf6. This viral RING-type ligase ubiquitinates cellular substrates and targets them to proteasomal degradation: TP53/p53, LIG4, MRE11-RAD50-NBS1 (MRN) complex, ITGA3, DAXX and BLM. E1B-55K probably acts as the substrate-specific adapter of the SCF-like E3 ubiquitin ligase complex. Degradation of host TP53/p53 activity is essential for preventing E1A-induced TP53 accumulation that would otherwise lead to cell apoptosis and growth arrest. E1B-55K also inactivates TP53 transcription-factor activity by binding its transactivation domain. E1B-55K also functions as a SUMO1 E3 ligase for TP53 which causes the latter to be sequestered in promyelocytic leukemia (PML) nuclear bodies thereby contributing to maximal inhibition of TP53 function. The sequence is that of E1B 55 kDa protein from Canis lupus familiaris (Dog).